A 439-amino-acid chain; its full sequence is Methylenetetrahydrofolate--tRNA-(uracil-5-)-methyltransferase TrmFO (439 aa).

8-13 (GGGLAG) lines the FAD pocket.

Belongs to the MnmG family. TrmFO subfamily. FAD serves as cofactor.

Its subcellular location is the cytoplasm. It catalyses the reaction uridine(54) in tRNA + (6R)-5,10-methylene-5,6,7,8-tetrahydrofolate + NADH + H(+) = 5-methyluridine(54) in tRNA + (6S)-5,6,7,8-tetrahydrofolate + NAD(+). The catalysed reaction is uridine(54) in tRNA + (6R)-5,10-methylene-5,6,7,8-tetrahydrofolate + NADPH + H(+) = 5-methyluridine(54) in tRNA + (6S)-5,6,7,8-tetrahydrofolate + NADP(+). Catalyzes the folate-dependent formation of 5-methyl-uridine at position 54 (M-5-U54) in all tRNAs. This is Methylenetetrahydrofolate--tRNA-(uracil-5-)-methyltransferase TrmFO from Dictyoglomus turgidum (strain DSM 6724 / Z-1310).